A 308-amino-acid chain; its full sequence is Malate dehydrogenase (308 aa).

NAD(+)-binding positions include 6–11 (GSGRVG) and Asp31. Substrate-binding residues include Arg80 and Arg86. Residues Asn93 and 116-118 (TTN) contribute to the NAD(+) site. Residues Asn118 and Arg149 each contribute to the substrate site. Residue His173 is the Proton acceptor of the active site.

The protein belongs to the LDH/MDH superfamily.

It catalyses the reaction (S)-malate + NAD(+) = oxaloacetate + NADH + H(+). Functionally, catalyzes the reversible oxidation of malate to oxaloacetate. This Thermoproteus tenax (strain ATCC 35583 / DSM 2078 / JCM 9277 / NBRC 100435 / Kra 1) protein is Malate dehydrogenase (mdh).